The chain runs to 427 residues: tRNA(Ile)-lysidine synthase (427 aa).

29–34 (SGGVDS) lines the ATP pocket.

The protein belongs to the tRNA(Ile)-lysidine synthase family.

It localises to the cytoplasm. The catalysed reaction is cytidine(34) in tRNA(Ile2) + L-lysine + ATP = lysidine(34) in tRNA(Ile2) + AMP + diphosphate + H(+). Ligates lysine onto the cytidine present at position 34 of the AUA codon-specific tRNA(Ile) that contains the anticodon CAU, in an ATP-dependent manner. Cytidine is converted to lysidine, thus changing the amino acid specificity of the tRNA from methionine to isoleucine. This is tRNA(Ile)-lysidine synthase from Thermosipho africanus (strain TCF52B).